The following is a 550-amino-acid chain: Chaperonin GroEL (550 aa).

Residues threonine 30–proline 33, lysine 51, aspartate 87–threonine 91, glycine 415, asparagine 479–alanine 481, and aspartate 495 contribute to the ATP site.

The protein belongs to the chaperonin (HSP60) family. Forms a cylinder of 14 subunits composed of two heptameric rings stacked back-to-back. Interacts with the co-chaperonin GroES.

The protein resides in the cytoplasm. It carries out the reaction ATP + H2O + a folded polypeptide = ADP + phosphate + an unfolded polypeptide.. In terms of biological role, together with its co-chaperonin GroES, plays an essential role in assisting protein folding. The GroEL-GroES system forms a nano-cage that allows encapsulation of the non-native substrate proteins and provides a physical environment optimized to promote and accelerate protein folding. In Polynucleobacter asymbioticus (strain DSM 18221 / CIP 109841 / QLW-P1DMWA-1) (Polynucleobacter necessarius subsp. asymbioticus), this protein is Chaperonin GroEL.